The primary structure comprises 357 residues: Mitogen-activated protein kinase Hog1 (357 aa).

The Protein kinase domain maps to 20 to 299 (YTDLQPVGMG…AGEALADPYL (280 aa)). Residues 26 to 34 (VGMGAFGLV) and K49 each bind ATP. Catalysis depends on D141, which acts as the Proton acceptor. Phosphothreonine is present on T171. A TXY motif is present at residues 171–173 (TGY). Phosphotyrosine is present on Y173.

Belongs to the protein kinase superfamily. Ser/Thr protein kinase family. MAP kinase subfamily. HOG1 sub-subfamily. Mg(2+) is required as a cofactor. Post-translationally, dually phosphorylated on Thr-171 and Tyr-173, which activates the enzyme.

The protein resides in the cytoplasm. It is found in the nucleus. The catalysed reaction is L-seryl-[protein] + ATP = O-phospho-L-seryl-[protein] + ADP + H(+). It catalyses the reaction L-threonyl-[protein] + ATP = O-phospho-L-threonyl-[protein] + ADP + H(+). Activated by tyrosine and threonine phosphorylation. Proline-directed serine/threonine-protein kinase involved in a signal transduction pathway that is activated by changes in the osmolarity of the extracellular environment. Controls osmotic regulation of transcription of target genes. This Zymoseptoria tritici (strain CBS 115943 / IPO323) (Speckled leaf blotch fungus) protein is Mitogen-activated protein kinase Hog1 (Hog1).